A 335-amino-acid polypeptide reads, in one-letter code: tRNA N6-adenosine threonylcarbamoyltransferase (335 aa).

2 residues coordinate Fe cation: H111 and H115. Substrate-binding positions include 134 to 138, D167, G180, and N270; that span reads LISGG. Position 298 (D298) interacts with Fe cation.

This sequence belongs to the KAE1 / TsaD family. Requires Fe(2+) as cofactor.

It localises to the cytoplasm. It catalyses the reaction L-threonylcarbamoyladenylate + adenosine(37) in tRNA = N(6)-L-threonylcarbamoyladenosine(37) in tRNA + AMP + H(+). Functionally, required for the formation of a threonylcarbamoyl group on adenosine at position 37 (t(6)A37) in tRNAs that read codons beginning with adenine. Is involved in the transfer of the threonylcarbamoyl moiety of threonylcarbamoyl-AMP (TC-AMP) to the N6 group of A37, together with TsaE and TsaB. TsaD likely plays a direct catalytic role in this reaction. In Nitrosococcus oceani (strain ATCC 19707 / BCRC 17464 / JCM 30415 / NCIMB 11848 / C-107), this protein is tRNA N6-adenosine threonylcarbamoyltransferase.